A 70-amino-acid polypeptide reads, in one-letter code: MLKMGVLLFTFLVLFPLAMFQLDADQPVERYAENKQDLNRDERMKIMLSALRQRQCCDWEWCDELCSCCW.

The first 24 residues, 1-24 (MLKMGVLLFTFLVLFPLAMFQLDA), serve as a signal peptide directing secretion. A propeptide spanning residues 25–54 (DQPVERYAENKQDLNRDERMKIMLSALRQR) is cleaved from the precursor. At Gln-55 the chain carries Pyrrolidone carboxylic acid. 3 disulfides stabilise this stretch: Cys-56/Cys-68, Cys-57/Cys-66, and Cys-62/Cys-69.

The protein belongs to the conotoxin M superfamily. Expressed by the venom duct.

It localises to the secreted. The polypeptide is Conotoxin Lt3.4 (Conus litteratus (Lettered cone)).